A 485-amino-acid polypeptide reads, in one-letter code: UDP-glycosyltransferase 91D1 (485 aa).

UDP-alpha-D-glucose-binding positions include Ser296, 355-356 (WA), 373-381 (HCGSGSIVE), and 395-398 (FCDQ).

The protein belongs to the UDP-glycosyltransferase family.

May glycosylate diterpenes or flavonols in leaves. The protein is UDP-glycosyltransferase 91D1 of Stevia rebaudiana (Stevia).